The primary structure comprises 195 residues: Imidazoleglycerol-phosphate dehydratase (195 aa).

It belongs to the imidazoleglycerol-phosphate dehydratase family.

Its subcellular location is the cytoplasm. It carries out the reaction D-erythro-1-(imidazol-4-yl)glycerol 3-phosphate = 3-(imidazol-4-yl)-2-oxopropyl phosphate + H2O. It participates in amino-acid biosynthesis; L-histidine biosynthesis; L-histidine from 5-phospho-alpha-D-ribose 1-diphosphate: step 6/9. The polypeptide is Imidazoleglycerol-phosphate dehydratase (Dinoroseobacter shibae (strain DSM 16493 / NCIMB 14021 / DFL 12)).